Consider the following 212-residue polypeptide: Protein GrpE (212 aa).

Residues 1–69 (MAEMSNNKTS…LESAKKEIES (69 aa)) form a disordered region. Positions 40-60 (ETTQTESMETAETETSLQTEL) are enriched in low complexity.

The protein belongs to the GrpE family. As to quaternary structure, homodimer.

Its subcellular location is the cytoplasm. Its function is as follows. Participates actively in the response to hyperosmotic and heat shock by preventing the aggregation of stress-denatured proteins, in association with DnaK and GrpE. It is the nucleotide exchange factor for DnaK and may function as a thermosensor. Unfolded proteins bind initially to DnaJ; upon interaction with the DnaJ-bound protein, DnaK hydrolyzes its bound ATP, resulting in the formation of a stable complex. GrpE releases ADP from DnaK; ATP binding to DnaK triggers the release of the substrate protein, thus completing the reaction cycle. Several rounds of ATP-dependent interactions between DnaJ, DnaK and GrpE are required for fully efficient folding. The protein is Protein GrpE of Leptospira interrogans serogroup Icterohaemorrhagiae serovar Lai (strain 56601).